A 299-amino-acid chain; its full sequence is Nucleotide-binding protein glr4163 (299 aa).

18–25 (SPAGAGRT) provides a ligand contact to ATP.

It belongs to the RapZ-like family.

Displays ATPase and GTPase activities. The chain is Nucleotide-binding protein glr4163 from Gloeobacter violaceus (strain ATCC 29082 / PCC 7421).